We begin with the raw amino-acid sequence, 384 residues long: Chaperone protein DnaJ (384 aa).

The J domain occupies 6 to 71; that stretch reads DYYEVLGISK…TKRKTYDQFG (66 aa). Residues 141-223 form a CR-type zinc finger; it reads GKKMSIKVNR…CHGTGNTRKV (83 aa). Zn(2+)-binding residues include Cys-154, Cys-157, Cys-171, Cys-174, Cys-197, Cys-200, Cys-211, and Cys-214. 4 CXXCXGXG motif repeats span residues 154-161, 171-178, 197-204, and 211-218; these read CEECNGTG, CSTCNGTG, CSACNGTG, and CSKCHGTG.

This sequence belongs to the DnaJ family. In terms of assembly, homodimer. Zn(2+) serves as cofactor.

The protein localises to the cytoplasm. Participates actively in the response to hyperosmotic and heat shock by preventing the aggregation of stress-denatured proteins and by disaggregating proteins, also in an autonomous, DnaK-independent fashion. Unfolded proteins bind initially to DnaJ; upon interaction with the DnaJ-bound protein, DnaK hydrolyzes its bound ATP, resulting in the formation of a stable complex. GrpE releases ADP from DnaK; ATP binding to DnaK triggers the release of the substrate protein, thus completing the reaction cycle. Several rounds of ATP-dependent interactions between DnaJ, DnaK and GrpE are required for fully efficient folding. Also involved, together with DnaK and GrpE, in the DNA replication of plasmids through activation of initiation proteins. This Clostridioides difficile (strain 630) (Peptoclostridium difficile) protein is Chaperone protein DnaJ.